The following is a 160-amino-acid chain: Endoribonuclease YbeY (160 aa).

Zn(2+) contacts are provided by His123, His127, and His133.

Belongs to the endoribonuclease YbeY family. The cofactor is Zn(2+).

It is found in the cytoplasm. Its function is as follows. Single strand-specific metallo-endoribonuclease involved in late-stage 70S ribosome quality control and in maturation of the 3' terminus of the 16S rRNA. The sequence is that of Endoribonuclease YbeY from Roseiflexus sp. (strain RS-1).